We begin with the raw amino-acid sequence, 1907 residues long: Chromatin modification-related protein EAF1 B (1907 aa).

4 disordered regions span residues 108–208 (ASPH…TDLV), 261–287 (NRVS…GSKT), 323–373 (GGSP…SHAN), and 449–469 (NQSH…ETEK). Positions 140-151 (SENKSVEGERNL) are enriched in basic and acidic residues. Composition is skewed to polar residues over residues 261 to 270 (NRVSSNSLNT), 333 to 342 (GQKNSSTQLN), and 355 to 372 (TNRG…SSHA). In terms of domain architecture, HSA spans 563 to 641 (CGTAPVEVRE…LSYAILQFWS (79 aa)). Disordered stretches follow at residues 836–909 (SSSL…AVQK) and 928–952 (AETS…TWHL). The segment covering 856 to 866 (RRVRTASRHRV) has biased composition (basic residues). 2 stretches are compositionally biased toward polar residues: residues 884-898 (TDAS…QDEY) and 942-952 (QGSAYDQTWHL). Residues 1049–1105 (SGNPWSLFEDQALVVLVHDMGPNWELISDAMNSTLKIKYIYRNPTECKDRHKILMDK) form the SANT domain. Disordered stretches follow at residues 1107–1131 (AGDG…PGIP), 1235–1266 (PVLP…GLQS), 1296–1319 (LSGR…DRGH), 1429–1465 (GHLS…QQEA), 1477–1594 (YLQQ…QQLN), 1638–1703 (VRPD…SPAT), 1767–1791 (VPQS…QASN), and 1824–1907 (VNNS…TKVE). 5 stretches are compositionally biased toward polar residues: residues 1116-1125 (DSGNSQSYPS), 1242-1266 (AHPS…GLQS), 1296-1310 (LSGR…STPA), 1431-1444 (LSQQ…SHVL), and 1453-1462 (QSPSQATGAQ). Low complexity predominate over residues 1493–1512 (PHVQQPQGSSVSSSSQNSPQ). A compositionally biased stretch (pro residues) spans 1513-1529 (TQPPVSPQPLSMPPVSP). Composition is skewed to polar residues over residues 1532 to 1545 (NINA…QKSQ), 1554 to 1568 (SPQS…QAGK), 1585 to 1594 (RQPTQGQQLN), 1640 to 1655 (PDQQ…TDLQ), 1662 to 1672 (PLSSNHSQQLP), 1681 to 1703 (PSPQ…SPAT), 1769 to 1782 (QSVT…SMGT), and 1824 to 1844 (VNNS…NQGL). Basic and acidic residues-rich tracts occupy residues 1863 to 1872 (SEEKRPKLPE) and 1882 to 1892 (LASEEQPHLEE).

The protein belongs to the EAF1 family. As to quaternary structure, component of the NuA4 histone acetyltransferase complex. Interacts with ARP4 and SWC4, and (via HSA domain) with TAF14 and TAF14B. As to expression, expressed in leaves.

Its subcellular location is the nucleus. In terms of biological role, component of the NuA4 histone acetyltransferase complex which is involved in transcriptional activation of selected genes principally by acetylation of nucleosomal histone H4 and H2A. This is Chromatin modification-related protein EAF1 B (EAF1B) from Arabidopsis thaliana (Mouse-ear cress).